The chain runs to 235 residues: Leucyl/phenylalanyl-tRNA--protein transferase (235 aa).

The protein belongs to the L/F-transferase family.

It localises to the cytoplasm. The catalysed reaction is N-terminal L-lysyl-[protein] + L-leucyl-tRNA(Leu) = N-terminal L-leucyl-L-lysyl-[protein] + tRNA(Leu) + H(+). The enzyme catalyses N-terminal L-arginyl-[protein] + L-leucyl-tRNA(Leu) = N-terminal L-leucyl-L-arginyl-[protein] + tRNA(Leu) + H(+). It catalyses the reaction L-phenylalanyl-tRNA(Phe) + an N-terminal L-alpha-aminoacyl-[protein] = an N-terminal L-phenylalanyl-L-alpha-aminoacyl-[protein] + tRNA(Phe). In terms of biological role, functions in the N-end rule pathway of protein degradation where it conjugates Leu, Phe and, less efficiently, Met from aminoacyl-tRNAs to the N-termini of proteins containing an N-terminal arginine or lysine. In Aeromonas hydrophila subsp. hydrophila (strain ATCC 7966 / DSM 30187 / BCRC 13018 / CCUG 14551 / JCM 1027 / KCTC 2358 / NCIMB 9240 / NCTC 8049), this protein is Leucyl/phenylalanyl-tRNA--protein transferase.